The following is a 362-amino-acid chain: DNA replication and repair protein RecF (362 aa).

30 to 37 (GLNAQGKS) contributes to the ATP binding site.

It belongs to the RecF family.

The protein resides in the cytoplasm. The RecF protein is involved in DNA metabolism; it is required for DNA replication and normal SOS inducibility. RecF binds preferentially to single-stranded, linear DNA. It also seems to bind ATP. The polypeptide is DNA replication and repair protein RecF (Thermoanaerobacter pseudethanolicus (strain ATCC 33223 / 39E) (Clostridium thermohydrosulfuricum)).